The sequence spans 407 residues: MDGFSRRRMLMTGGALGAVGALGAATRALARPLWTWSPSASVAGTGVGVDPEYVWDEEADPVLAAVIDRGEVPAVNALLKQWTRNDQALPGGLPGDLREFMEHARRMPSWADKAALDRGAQFSKTKGIYVGALYGLGSGLMSTAIPRESRAVYYSKGGADMKDRIAKTARLGYDIGDLDAYLPHGSMIVTAVKTRMVHAAVRHLLPQSPAWSQTSGGQKIPISQADIMVTWHSLATFVMRKMKQWGVRVNTADAEAYLHVWQVSAHMLGVSDEYIPATWDAANAQSKQVLDPILAHTPEGEALTEVLLGIVAELDAGLTRPLIGAFSRYTLGGEVGDMIGLAKQPVLERLIATAWPLLVAFREGLIPLPAVPAVLWTLEEALRKFVLLFLSEGRRIAIDIPDVNRPS.

Residues Met1 to Ala30 constitute a signal peptide (tat-type signal). His198 lines the heme pocket.

This sequence belongs to the rubber oxygenase Lcp family. Heme b serves as cofactor. Post-translationally, exported by the Tat system. The position of the signal peptide cleavage has not been experimentally proven.

It localises to the secreted. It participates in biopolymer metabolism. Its function is as follows. Involved in the initial step of rubber degradation. Catalyzes the oxidative C-C cleavage of poly(cis-1,4-isoprene) in synthetic as well as in natural rubber by the addition of oxygen (O2) to the double bonds, leading to a mixture of oligonucleotide-isoprenoids with terminal keto and aldehyde groups (endo-type cleavage). The cleavage products are of different lengths, ranging from C20 (four isoprene units) to higher oligo-isoprenoids. Is not able to cleave low-molecular-weight substrate analogs with isoprenoid structure such as squalene (1,4-trans-isoprenoid), carotenoids, or alpha-tocopherol. The polypeptide is Rubber oxygenase (Streptomyces sp. (strain K30)).